Here is a 418-residue protein sequence, read N- to C-terminus: Thyroxine-binding globulin (418 aa).

A signal peptide spans 1–20 (MSMFFYLFLLVLGLQATIHC). N-linked (GlcNAc...) asparagine glycosylation is found at Asn24, Asn39, Asn102, Asn168, Asn227, and Asn256. Asn296 and Lys401 together coordinate thyroxine.

The protein belongs to the serpin family. As to expression, expressed by the liver and secreted in plasma.

The protein localises to the secreted. Major thyroid hormone transport protein in serum. This chain is Thyroxine-binding globulin (Serpina7), found in Rattus norvegicus (Rat).